The primary structure comprises 753 residues: CCR4-NOT transcription complex subunit 3 (753 aa).

A disordered region spans residues alanine 240 to isoleucine 534. Low complexity predominate over residues serine 257–serine 268. A compositionally biased stretch (basic and acidic residues) spans aspartate 284–aspartate 293. Threonine 292 is modified (phosphothreonine). The segment covering serine 294–glutamine 315 has biased composition (polar residues). Serine 299 carries the phosphoserine modification. Positions proline 317–alanine 330 are enriched in pro residues. Residues proline 350 to alanine 376 show a composition bias toward low complexity. Residues serine 396 to serine 408 show a composition bias toward gly residues. Over residues asparagine 424–valine 433 the composition is skewed to polar residues. Over residues alanine 441–proline 457 the composition is skewed to low complexity. Pro residues predominate over residues proline 458–serine 467. The span at glycine 479–serine 491 shows a compositional bias: gly residues. Serine 542 bears the Phosphoserine mark. The repressor domain stretch occupies residues glutamate 661–glutamine 753.

The protein belongs to the CNOT2/3/5 family. As to quaternary structure, component of the CCR4-NOT complex; distinct complexes seem to exist that differ in the participation of probably mutually exclusive catalytic subunits. In the complex interacts directly with CNOT2. Interacts with TIP120B and NANOS2. Interacts with EBF1. Interacts in an RNA-independent manner with BICC1 (via KH domains). Ubiquitous. Highly expressed in brain, heart, thymus, spleen, kidney, liver, small intestine, lung and peripheral blood leukocytes.

Its subcellular location is the cytoplasm. It localises to the nucleus. The protein localises to the P-body. Component of the CCR4-NOT complex which is one of the major cellular mRNA deadenylases and is linked to various cellular processes including bulk mRNA degradation, miRNA-mediated repression, translational repression during translational initiation and general transcription regulation. Additional complex functions may be a consequence of its influence on mRNA expression. May be involved in metabolic regulation; may be involved in recruitment of the CCR4-NOT complex to deadenylation target mRNAs involved in energy metabolism. Involved in mitotic progression and regulation of the spindle assembly checkpoint by regulating the stability of MAD1L1 mRNA. Can repress transcription and may link the CCR4-NOT complex to transcriptional regulation; the repressive function may involve histone deacetylases. Involved in the maintenance of embryonic stem (ES) cell identity. The chain is CCR4-NOT transcription complex subunit 3 from Homo sapiens (Human).